Here is a 209-residue protein sequence, read N- to C-terminus: Thiamine-phosphate synthase (209 aa).

Residues 36-40 (QLRDK) and Asn68 contribute to the 4-amino-2-methyl-5-(diphosphooxymethyl)pyrimidine site. 2 residues coordinate Mg(2+): Asp69 and Asp88. A 4-amino-2-methyl-5-(diphosphooxymethyl)pyrimidine-binding site is contributed by Ser107. 2-[(2R,5Z)-2-carboxy-4-methylthiazol-5(2H)-ylidene]ethyl phosphate is bound at residue 133–135 (TNS). Lys136 contributes to the 4-amino-2-methyl-5-(diphosphooxymethyl)pyrimidine binding site. 2-[(2R,5Z)-2-carboxy-4-methylthiazol-5(2H)-ylidene]ethyl phosphate is bound by residues Gly164 and 184–185 (IT).

It belongs to the thiamine-phosphate synthase family. It depends on Mg(2+) as a cofactor.

The catalysed reaction is 2-[(2R,5Z)-2-carboxy-4-methylthiazol-5(2H)-ylidene]ethyl phosphate + 4-amino-2-methyl-5-(diphosphooxymethyl)pyrimidine + 2 H(+) = thiamine phosphate + CO2 + diphosphate. The enzyme catalyses 2-(2-carboxy-4-methylthiazol-5-yl)ethyl phosphate + 4-amino-2-methyl-5-(diphosphooxymethyl)pyrimidine + 2 H(+) = thiamine phosphate + CO2 + diphosphate. It catalyses the reaction 4-methyl-5-(2-phosphooxyethyl)-thiazole + 4-amino-2-methyl-5-(diphosphooxymethyl)pyrimidine + H(+) = thiamine phosphate + diphosphate. It functions in the pathway cofactor biosynthesis; thiamine diphosphate biosynthesis; thiamine phosphate from 4-amino-2-methyl-5-diphosphomethylpyrimidine and 4-methyl-5-(2-phosphoethyl)-thiazole: step 1/1. Condenses 4-methyl-5-(beta-hydroxyethyl)thiazole monophosphate (THZ-P) and 2-methyl-4-amino-5-hydroxymethyl pyrimidine pyrophosphate (HMP-PP) to form thiamine monophosphate (TMP). The polypeptide is Thiamine-phosphate synthase (Shouchella clausii (strain KSM-K16) (Alkalihalobacillus clausii)).